A 758-amino-acid chain; its full sequence is 5-methyltetrahydropteroyltriglutamate--homocysteine methyltransferase (758 aa).

5-methyltetrahydropteroyltri-L-glutamate is bound by residues 15-18 (RELK) and lysine 114. Residues 433–435 (IGS) and glutamate 486 contribute to the L-homocysteine site. L-methionine contacts are provided by residues 433–435 (IGS) and glutamate 486. 5-methyltetrahydropteroyltri-L-glutamate-binding positions include 517–518 (RC) and tryptophan 563. Aspartate 601 contributes to the L-homocysteine binding site. Aspartate 601 contacts L-methionine. Glutamate 607 contributes to the 5-methyltetrahydropteroyltri-L-glutamate binding site. Residues histidine 643, cysteine 645, and glutamate 667 each contribute to the Zn(2+) site. Residue histidine 696 is the Proton donor of the active site. Cysteine 728 provides a ligand contact to Zn(2+).

This sequence belongs to the vitamin-B12 independent methionine synthase family. Requires Zn(2+) as cofactor.

The enzyme catalyses 5-methyltetrahydropteroyltri-L-glutamate + L-homocysteine = tetrahydropteroyltri-L-glutamate + L-methionine. Its pathway is amino-acid biosynthesis; L-methionine biosynthesis via de novo pathway; L-methionine from L-homocysteine (MetE route): step 1/1. Functionally, catalyzes the transfer of a methyl group from 5-methyltetrahydrofolate to homocysteine resulting in methionine formation. This chain is 5-methyltetrahydropteroyltriglutamate--homocysteine methyltransferase, found in Syntrophotalea carbinolica (strain DSM 2380 / NBRC 103641 / GraBd1) (Pelobacter carbinolicus).